Consider the following 599-residue polypeptide: MKNIRNFSIIAHIDHGKSTLSDRIIQICGGLSDREMEAQVLDSMDLERERGITIKAQSVTLDYKAADGETYHLNFIDTPGHVDFSYEVSRSLAACEGALLVVDAGQGVEAQTLANCYTAMEMDLEVVPVLNKIDLPAADPERVAEEIEDIVGIDATDAVRCSAKTGVGVQDVLERLVRDIPPPEGDPEGPLQALIIDSWFDNYLGVVSLVRIKNGTMRKGDKVKVMSTGQVYNADRLGIFTPKQIDRTKLKCGEVGWLVCAIKDIHGAPVGDTLTLARNPAEKALPGFKKVKPQVYAGLFPVSSDDYENFRDALGKLSLNDASLFYEPESSTALGFGFRCGFLGLLHMEIIQERLEREYDLDLITTAPTVVYEVETTAKEIIYVDSPSKLPPLNNIYELREPIAECHMLLPQAYLGNVITLCVEKRGVQTNMVYHGNQVALTYEIPMAEVVLDFFDRLKSTSRGYASLDYNFKRFQASDMVRVDVLINNERVDALALITHRGNSQSRGRELVEKMKELIPRQQFDIAIQAAIGTHIIARSTVKQLRKNVLAKCYGGDISRKKKLLQKQKEGKKRMKQIGNVELPQEAFLAILHVGKDSK.

One can recognise a tr-type G domain in the interval 2-184 (KNIRNFSIIA…RLVRDIPPPE (183 aa)). Residues 14–19 (DHGKST) and 131–134 (NKID) contribute to the GTP site.

The protein belongs to the TRAFAC class translation factor GTPase superfamily. Classic translation factor GTPase family. LepA subfamily.

The protein resides in the cell inner membrane. The catalysed reaction is GTP + H2O = GDP + phosphate + H(+). Functionally, required for accurate and efficient protein synthesis under certain stress conditions. May act as a fidelity factor of the translation reaction, by catalyzing a one-codon backward translocation of tRNAs on improperly translocated ribosomes. Back-translocation proceeds from a post-translocation (POST) complex to a pre-translocation (PRE) complex, thus giving elongation factor G a second chance to translocate the tRNAs correctly. Binds to ribosomes in a GTP-dependent manner. This Citrobacter koseri (strain ATCC BAA-895 / CDC 4225-83 / SGSC4696) protein is Elongation factor 4.